Reading from the N-terminus, the 493-residue chain is Protein nucleotidyltransferase YdiU (493 aa).

ATP is bound by residues glycine 96, glycine 98, arginine 99, lysine 119, aspartate 131, glycine 132, arginine 182, and arginine 189. The active-site Proton acceptor is aspartate 258. Mg(2+)-binding residues include asparagine 259 and aspartate 268. Aspartate 268 is an ATP binding site. Positions 471 to 493 are disordered; the sequence is EKYTEFKNPPAPKERVSQTFCGT.

Belongs to the SELO family. The cofactor is Mg(2+). Requires Mn(2+) as cofactor.

It carries out the reaction L-seryl-[protein] + ATP = 3-O-(5'-adenylyl)-L-seryl-[protein] + diphosphate. The enzyme catalyses L-threonyl-[protein] + ATP = 3-O-(5'-adenylyl)-L-threonyl-[protein] + diphosphate. It catalyses the reaction L-tyrosyl-[protein] + ATP = O-(5'-adenylyl)-L-tyrosyl-[protein] + diphosphate. The catalysed reaction is L-histidyl-[protein] + UTP = N(tele)-(5'-uridylyl)-L-histidyl-[protein] + diphosphate. It carries out the reaction L-seryl-[protein] + UTP = O-(5'-uridylyl)-L-seryl-[protein] + diphosphate. The enzyme catalyses L-tyrosyl-[protein] + UTP = O-(5'-uridylyl)-L-tyrosyl-[protein] + diphosphate. Its function is as follows. Nucleotidyltransferase involved in the post-translational modification of proteins. It can catalyze the addition of adenosine monophosphate (AMP) or uridine monophosphate (UMP) to a protein, resulting in modifications known as AMPylation and UMPylation. This chain is Protein nucleotidyltransferase YdiU, found in Nitrosococcus oceani (strain ATCC 19707 / BCRC 17464 / JCM 30415 / NCIMB 11848 / C-107).